Here is a 152-residue protein sequence, read N- to C-terminus: Ribosome maturation factor RimP (152 aa).

It belongs to the RimP family.

It is found in the cytoplasm. In terms of biological role, required for maturation of 30S ribosomal subunits. The sequence is that of Ribosome maturation factor RimP from Porphyromonas gingivalis (strain ATCC BAA-308 / W83).